A 194-amino-acid polypeptide reads, in one-letter code: Naphthalene 1,2-dioxygenase system, small oxygenase component (194 aa).

This sequence belongs to the bacterial ring-hydroxylating dioxygenase beta subunit family. The naphthalene dioxygenase (NDO) multicomponent enzyme system is composed of an electron transfer component and a dioxygenase component (iron sulfur protein (ISP)). The electron transfer component is composed of a ferredoxin reductase (NdoR) and a ferredoxin (NdoA), and the dioxygenase component is formed of a heterohexamer (trimer of heterodimers) of three large alpha subunits (NdoB) and three small beta subunits (NdoC).

The protein operates within aromatic compound metabolism; naphthalene degradation. In terms of biological role, component of the naphthalene dioxygenase (NDO) multicomponent enzyme system which catalyzes the incorporation of both atoms of molecular oxygen into naphthalene to form cis-(1R,2S)-dihydroxy-1,2-dihydronaphthalene. The beta subunit seems to have a structural role in the holoenzyme. Also able to catalyze the cis-dihydroxylation of biphenyl and phenanthrene. This chain is Naphthalene 1,2-dioxygenase system, small oxygenase component, found in Pseudomonas putida (Arthrobacter siderocapsulatus).